The primary structure comprises 158 residues: Auxin-responsive protein IAA31 (158 aa).

Residues 1–40 are compositionally biased toward low complexity; it reads MEVSNSCSSFSSSSVDSTKPSPSESSVNLSLSLTFPSTSP. The tract at residues 1 to 49 is disordered; sequence MEVSNSCSSFSSSSVDSTKPSPSESSVNLSLSLTFPSTSPQREARQDWP. The EAR-like (transcriptional repression) motif lies at 29–33; it reads LSLSL. The PB1 domain maps to 72-157; sequence SLFVKVYMEG…RRLKITRPER (86 aa).

This sequence belongs to the Aux/IAA family. Homodimers and heterodimers.

It is found in the nucleus. Aux/IAA proteins are short-lived transcriptional factors that function as repressors of early auxin response genes at low auxin concentrations. Repression is thought to result from the interaction with auxin response factors (ARFs), proteins that bind to the auxin-responsive promoter element (AuxRE). Formation of heterodimers with ARF proteins may alter their ability to modulate early auxin response genes expression. The polypeptide is Auxin-responsive protein IAA31 (IAA31) (Arabidopsis thaliana (Mouse-ear cress)).